The chain runs to 419 residues: Transcription termination factor Rho (419 aa).

Residues Asp48–Lys123 enclose the Rho RNA-BD domain. RNA-binding stretches follow at residues Gly61 to Arg66, Asp78 to Tyr80, and Glu108 to Tyr110. Residues Gly169–Gly174, Lys181–Ile186, and Arg212 contribute to the ATP site. Residues Val284–Gly288 are RNA-binding 2.

The protein belongs to the Rho family. In terms of assembly, homohexamer. The homohexamer assembles into an open ring structure.

In terms of biological role, facilitates transcription termination by a mechanism that involves Rho binding to the nascent RNA, activation of Rho's RNA-dependent ATPase activity, and release of the mRNA from the DNA template. The polypeptide is Transcription termination factor Rho (Buchnera aphidicola subsp. Schizaphis graminum (strain Sg)).